The following is a 148-amino-acid chain: UPF0756 membrane protein YeaL (148 aa).

Helical transmembrane passes span 14 to 34 (ALGFISHNTTVAVSILVLIIV), 51 to 71 (LSIGIIILTIGVMAPIASGTL), 86 to 106 (LVAIAVGVIVSWLGGRGVTLM), and 121 to 141 (VLGVALFRGVPVGPLIAAGLV).

It belongs to the UPF0756 family.

It localises to the cell membrane. This is UPF0756 membrane protein YeaL from Shigella flexneri.